Consider the following 96-residue polypeptide: Co-chaperonin GroES (96 aa).

Belongs to the GroES chaperonin family. Heptamer of 7 subunits arranged in a ring. Interacts with the chaperonin GroEL.

It localises to the cytoplasm. Functionally, together with the chaperonin GroEL, plays an essential role in assisting protein folding. The GroEL-GroES system forms a nano-cage that allows encapsulation of the non-native substrate proteins and provides a physical environment optimized to promote and accelerate protein folding. GroES binds to the apical surface of the GroEL ring, thereby capping the opening of the GroEL channel. This Haemophilus influenzae (strain PittGG) protein is Co-chaperonin GroES.